We begin with the raw amino-acid sequence, 77 residues long: Small ribosomal subunit protein uS17 (77 aa).

It belongs to the universal ribosomal protein uS17 family. As to quaternary structure, part of the 30S ribosomal subunit.

In terms of biological role, one of the primary rRNA binding proteins, it binds specifically to the 5'-end of 16S ribosomal RNA. This Anaplasma marginale (strain St. Maries) protein is Small ribosomal subunit protein uS17.